An 81-amino-acid polypeptide reads, in one-letter code: ATP synthase subunit c (81 aa).

The next 2 helical transmembrane spans lie at 3–23 (PLIAAASVVAAALAVGLGAIG) and 57–77 (LAFMEALTIYGLVVSLVLLFA).

It belongs to the ATPase C chain family. As to quaternary structure, F-type ATPases have 2 components, F(1) - the catalytic core - and F(0) - the membrane proton channel. F(1) has five subunits: alpha(3), beta(3), gamma(1), delta(1), epsilon(1). F(0) has four main subunits: a(1), b(1), b'(1) and c(10-14). The alpha and beta chains form an alternating ring which encloses part of the gamma chain. F(1) is attached to F(0) by a central stalk formed by the gamma and epsilon chains, while a peripheral stalk is formed by the delta, b and b' chains.

The protein localises to the cellular thylakoid membrane. In terms of biological role, f(1)F(0) ATP synthase produces ATP from ADP in the presence of a proton or sodium gradient. F-type ATPases consist of two structural domains, F(1) containing the extramembraneous catalytic core and F(0) containing the membrane proton channel, linked together by a central stalk and a peripheral stalk. During catalysis, ATP synthesis in the catalytic domain of F(1) is coupled via a rotary mechanism of the central stalk subunits to proton translocation. Functionally, key component of the F(0) channel; it plays a direct role in translocation across the membrane. A homomeric c-ring of between 10-14 subunits forms the central stalk rotor element with the F(1) delta and epsilon subunits. The polypeptide is ATP synthase subunit c (Trichodesmium erythraeum (strain IMS101)).